Reading from the N-terminus, the 669-residue chain is Polyamine deacetylase HDAC10 (669 aa).

The segment at Met-1 to Gly-323 is histone deacetylase. Asp-20 contributes to the substrate binding site. A Substrate specificity motif is present at residues Pro-21–Glu-24. His-135 (proton donor/acceptor) is an active-site residue. Residues Asp-172, His-174, and Asp-265 each coordinate Zn(2+). Tyr-305 is a substrate binding site. Polar residues predominate over residues Asp-361–Ser-373. A disordered region spans residues Asp-361–Val-387. Ser-393 bears the Phosphoserine mark.

This sequence belongs to the histone deacetylase family. HD type 2 subfamily. Interacts with HDAC3. Interacts with HDAC2 and NCOR2/SMRT. Interacts with HSPA8/HSC70. Interacts with MSH2. As to expression, widely expressed with high levels in liver and kidney.

Its subcellular location is the cytoplasm. It localises to the nucleus. It carries out the reaction N(8)-acetylspermidine + H2O = spermidine + acetate. The enzyme catalyses N-acetylputrescine + H2O = putrescine + acetate. The catalysed reaction is N-acetylcadaverine + H2O = cadaverine + acetate. It catalyses the reaction N(6)-acetyl-L-lysyl-[protein] + H2O = L-lysyl-[protein] + acetate. In terms of biological role, polyamine deacetylase (PDAC), which acts preferentially on N(8)-acetylspermidine, and also on acetylcadaverine and acetylputrescine. Exhibits attenuated catalytic activity toward N(1),N(8)-diacetylspermidine and very low activity, if any, toward N(1)-acetylspermidine. Histone deacetylase activity has been observed in vitro. Has also been shown to be involved in MSH2 deacetylation. The physiological relevance of protein/histone deacetylase activity is unclear and could be very weak. May play a role in the promotion of late stages of autophagy, possibly autophagosome-lysosome fusion and/or lysosomal exocytosis in neuroblastoma cells. May play a role in homologous recombination. May promote DNA mismatch repair. This Homo sapiens (Human) protein is Polyamine deacetylase HDAC10 (HDAC10).